The primary structure comprises 351 residues: Dihydroorotate dehydrogenase (quinone) (351 aa).

Residues 61–65 and Thr-85 contribute to the FMN site; that span reads AGLDK. Lys-65 is a binding site for substrate. A substrate-binding site is contributed by 110 to 114; that stretch reads NRMGF. FMN-binding residues include Asn-139 and Asn-172. Residue Asn-172 coordinates substrate. Catalysis depends on Ser-175, which acts as the Nucleophile. Residue Asn-177 coordinates substrate. FMN contacts are provided by Lys-217 and Thr-245. Substrate is bound at residue 246-247; sequence NT. Residues Gly-268, Gly-297, and 318–319 each bind FMN; that span reads YS.

This sequence belongs to the dihydroorotate dehydrogenase family. Type 2 subfamily. Monomer. FMN serves as cofactor.

Its subcellular location is the cell membrane. It catalyses the reaction (S)-dihydroorotate + a quinone = orotate + a quinol. It functions in the pathway pyrimidine metabolism; UMP biosynthesis via de novo pathway; orotate from (S)-dihydroorotate (quinone route): step 1/1. Functionally, catalyzes the conversion of dihydroorotate to orotate with quinone as electron acceptor. In Stenotrophomonas maltophilia (strain K279a), this protein is Dihydroorotate dehydrogenase (quinone).